The sequence spans 248 residues: 1-(5-phosphoribosyl)-5-[(5-phosphoribosylamino)methylideneamino] imidazole-4-carboxamide isomerase (248 aa).

The active-site Proton acceptor is D11. D132 acts as the Proton donor in catalysis.

Belongs to the HisA/HisF family.

It localises to the cytoplasm. It carries out the reaction 1-(5-phospho-beta-D-ribosyl)-5-[(5-phospho-beta-D-ribosylamino)methylideneamino]imidazole-4-carboxamide = 5-[(5-phospho-1-deoxy-D-ribulos-1-ylimino)methylamino]-1-(5-phospho-beta-D-ribosyl)imidazole-4-carboxamide. The protein operates within amino-acid biosynthesis; L-histidine biosynthesis; L-histidine from 5-phospho-alpha-D-ribose 1-diphosphate: step 4/9. In Afipia carboxidovorans (strain ATCC 49405 / DSM 1227 / KCTC 32145 / OM5) (Oligotropha carboxidovorans), this protein is 1-(5-phosphoribosyl)-5-[(5-phosphoribosylamino)methylideneamino] imidazole-4-carboxamide isomerase.